The chain runs to 532 residues: Protein tweety homolog 2 (532 aa).

Topologically, residues methionine 1–serine 44 are extracellular. Residues leucine 45 to valine 65 traverse the membrane as a helical segment. The Cytoplasmic portion of the chain corresponds to tyrosine 66–cysteine 87. A helical transmembrane segment spans residues cysteine 88 to phenylalanine 108. Residues tyrosine 109–tryptophan 213 lie on the Extracellular side of the membrane. The Ca(2+) site is built by glutamate 113 and aspartate 116. A glycan (N-linked (GlcNAc...) asparagine) is linked at asparagine 129. An RGD motif is present at residues arginine 164 to aspartate 166. Threonine 199 carries the phosphothreonine modification. A helical transmembrane segment spans residues leucine 214 to leucine 234. Over alanine 235–cysteine 240 the chain is Cytoplasmic. A helical membrane pass occupies residues leucine 241–alanine 261. The Extracellular portion of the chain corresponds to alanine 262 to glycine 385. 2 cysteine pairs are disulfide-bonded: cysteine 274-cysteine 382 and cysteine 300-cysteine 367. Residues asparagine 283 and asparagine 352 are each glycosylated (N-linked (GlcNAc...) asparagine). A helical membrane pass occupies residues isoleucine 386–leucine 406. The Cytoplasmic portion of the chain corresponds to threonine 407–serine 532. Serine 504 is subject to Phosphoserine. The PY-motif; mediates interaction with NEDD4L signature appears at proline 506–tyrosine 509.

It belongs to the tweety family. In terms of assembly, forms cis-homodimers in the presence of Ca(+2) and forms monomers and trans-dimers in the absence of Ca(2+). Interacts with NEDD4L. Ubiquitinated by NEDD4L, leading to its proteasomal degradation.

Its subcellular location is the cell membrane. It carries out the reaction chloride(in) = chloride(out). It catalyses the reaction L-glutamate(out) = L-glutamate(in). With respect to regulation, inhibited by (4-[(2-butyl-6,7-dichloro-2- cyclopentyl-2,3-dihydro-1-oxo-1H-inden-5-yl)oxy]butanoic acid). Its function is as follows. Calcium-independent, swelling-dependent volume-regulated anion channel (VRAC-swell) which plays a pivotal role in the process of regulatory volume decrease (RVD) in the brain through the efflux of anions like chloride and organic osmolytes like glutamate. Probable large-conductance Ca(2+)-activated chloride channel. In Mus musculus (Mouse), this protein is Protein tweety homolog 2 (Ttyh2).